The following is a 100-amino-acid chain: Cytochrome c2 iso-1 (100 aa).

4 residues coordinate heme c: Cys-11, Cys-14, His-15, and Met-76.

It belongs to the cytochrome c family. In terms of processing, binds 1 heme c group covalently per subunit.

Functionally, cytochrome c2 is found mainly in purple, non-sulfur, photosynthetic bacteria where it functions as the electron donor to the oxidized bacteriochlorophyll in the photophosphorylation pathway. However, it may also have a role in the respiratory chain and is found in some non-photosynthetic bacteria. The polypeptide is Cytochrome c2 iso-1 (Magnetospirillum molischianum (Rhodospirillum molischianum)).